A 92-amino-acid chain; its full sequence is Small ribosomal subunit protein uS19c (92 aa).

The protein belongs to the universal ribosomal protein uS19 family.

It is found in the plastid. The protein resides in the chloroplast. Protein S19 forms a complex with S13 that binds strongly to the 16S ribosomal RNA. The polypeptide is Small ribosomal subunit protein uS19c (rps19) (Pinus thunbergii (Japanese black pine)).